Consider the following 581-residue polypeptide: Sodium/hydrogen exchanger 8 (581 aa).

The next 11 membrane-spanning stretches (helical) occupy residues Met60–Ile80, Leu84–Ile104, Pro123–His143, Leu156–Leu176, Phe191–Ala211, Phe264–Leu284, Gly311–Met331, Val354–Pro374, Ile379–Pro399, Met417–Leu437, and Thr451–Ile471. The residue at position 510 (Thr510) is a Phosphothreonine. Residues Ser571 and Ser573 each carry the phosphoserine modification.

It belongs to the monovalent cation:proton antiporter 1 (CPA1) transporter (TC 2.A.36) family. Ubiquitous. Strongly expressed in skeletal muscle and kidney. Detected throughout the entire gastrointestinal tract, with high expression detected in stomach, duodenum and ascending colon.

It localises to the golgi apparatus membrane. The protein resides in the golgi apparatus. The protein localises to the trans-Golgi network membrane. Its subcellular location is the endosome. It is found in the multivesicular body membrane. It localises to the apical cell membrane. The protein resides in the cytoplasmic vesicle. The protein localises to the secretory vesicle. Its subcellular location is the acrosome. The enzyme catalyses Na(+)(in) + H(+)(out) = Na(+)(out) + H(+)(in). Its activity is regulated as follows. HOE642 inhibits SLC9A8 activity. Functionally, na(+)/H(+) antiporter. Mediates the electoneutral exchange of intracellular H(+) ions for extracellular Na(+) in 1:1 stoichiometry. Acts as an Na(+)/H(+) exchanger in the trans-Golgi. Contributes to the regulation of pH regulation of Golgi apparatus, and consequently, in protein trafficking and endosomal morphology. In germ cells, plays a crucial role in acrosome biogenesis and sperm development, probably by playing a role in the fusion of the Golgi-derived vesicles that form the acrosomal cap. Can also be active at the cell surface of specialized cells. In the small intestine, at the cell membrane, plays a major physiological role in transepithelial absorption of Na(+) and regulates intracellular pH homeostasis of intestinal epithelial cells. Acts as an important regulator of mucosal integrity in the intestine and in the stomach, could mediate the pH fluctuation necessary for mucin exocytosis or assist membrane trafficking of other proteins. Plays a role in photoreceptor survival and in the maintenance of intracellular pH homeostasis in retinal pigment epithelium (RPE cells). This Homo sapiens (Human) protein is Sodium/hydrogen exchanger 8.